We begin with the raw amino-acid sequence, 308 residues long: D-alanine--D-alanine ligase (308 aa).

Positions 102–302 (KHVAKAAGIP…FGEFLRWMVE (201 aa)) constitute an ATP-grasp domain. 128 to 183 (PMKPPYVVKPVREGSSFGVVIVKEDQSHPPQVITSSEWRYGDRVMVERYIAGREFT) contacts ATP. The Mg(2+) site is built by D252, E269, and N271.

This sequence belongs to the D-alanine--D-alanine ligase family. The cofactor is Mg(2+). Mn(2+) serves as cofactor.

The protein resides in the cytoplasm. The enzyme catalyses 2 D-alanine + ATP = D-alanyl-D-alanine + ADP + phosphate + H(+). Its pathway is cell wall biogenesis; peptidoglycan biosynthesis. Its function is as follows. Cell wall formation. The chain is D-alanine--D-alanine ligase from Rhizobium meliloti (strain 1021) (Ensifer meliloti).